Reading from the N-terminus, the 93-residue chain is Small ribosomal subunit protein bS18 (93 aa).

The protein belongs to the bacterial ribosomal protein bS18 family. As to quaternary structure, part of the 30S ribosomal subunit. Forms a tight heterodimer with protein bS6.

Its function is as follows. Binds as a heterodimer with protein bS6 to the central domain of the 16S rRNA, where it helps stabilize the platform of the 30S subunit. This Variovorax paradoxus (strain S110) protein is Small ribosomal subunit protein bS18.